We begin with the raw amino-acid sequence, 177 residues long: ATP-dependent protease subunit HslV (177 aa).

Threonine 2 is an active-site residue. Na(+)-binding residues include glycine 157, cysteine 160, and threonine 163.

The protein belongs to the peptidase T1B family. HslV subfamily. In terms of assembly, a double ring-shaped homohexamer of HslV is capped on each side by a ring-shaped HslU homohexamer. The assembly of the HslU/HslV complex is dependent on binding of ATP.

The protein resides in the cytoplasm. It catalyses the reaction ATP-dependent cleavage of peptide bonds with broad specificity.. Allosterically activated by HslU binding. Functionally, protease subunit of a proteasome-like degradation complex believed to be a general protein degrading machinery. The polypeptide is ATP-dependent protease subunit HslV (Aeromonas hydrophila subsp. hydrophila (strain ATCC 7966 / DSM 30187 / BCRC 13018 / CCUG 14551 / JCM 1027 / KCTC 2358 / NCIMB 9240 / NCTC 8049)).